Reading from the N-terminus, the 227-residue chain is Cytochrome c oxidase subunit 2 (227 aa).

Residues 1-14 lie on the Mitochondrial intermembrane side of the membrane; that stretch reads MAYPFQLGLQDATS. The helical transmembrane segment at 15-45 threads the bilayer; sequence PIMEELLHFHDHTLMIVFLISSLVLYIISLM. At 46 to 59 the chain is on the mitochondrial matrix side; that stretch reads LTTKLTHTSTMDAQ. The helical transmembrane segment at 60-87 threads the bilayer; sequence EVETVWTILPAIILILIALLSLRILYMM. Topologically, residues 88 to 227 are mitochondrial intermembrane; sequence DEINNPFLTM…YFETWSALMV (140 aa). 6 residues coordinate Cu cation: His161, Cys196, Glu198, Cys200, His204, and Met207. Glu198 contacts Mg(2+). Tyr218 bears the Phosphotyrosine mark.

It belongs to the cytochrome c oxidase subunit 2 family. As to quaternary structure, component of the cytochrome c oxidase (complex IV, CIV), a multisubunit enzyme composed of 14 subunits. The complex is composed of a catalytic core of 3 subunits MT-CO1, MT-CO2 and MT-CO3, encoded in the mitochondrial DNA, and 11 supernumerary subunits COX4I, COX5A, COX5B, COX6A, COX6B, COX6C, COX7A, COX7B, COX7C, COX8 and NDUFA4, which are encoded in the nuclear genome. The complex exists as a monomer or a dimer and forms supercomplexes (SCs) in the inner mitochondrial membrane with NADH-ubiquinone oxidoreductase (complex I, CI) and ubiquinol-cytochrome c oxidoreductase (cytochrome b-c1 complex, complex III, CIII), resulting in different assemblies (supercomplex SCI(1)III(2)IV(1) and megacomplex MCI(2)III(2)IV(2)). Found in a complex with TMEM177, COA6, COX18, COX20, SCO1 and SCO2. Interacts with TMEM177 in a COX20-dependent manner. Interacts with COX20. Interacts with COX16. Cu cation is required as a cofactor.

Its subcellular location is the mitochondrion inner membrane. It catalyses the reaction 4 Fe(II)-[cytochrome c] + O2 + 8 H(+)(in) = 4 Fe(III)-[cytochrome c] + 2 H2O + 4 H(+)(out). Component of the cytochrome c oxidase, the last enzyme in the mitochondrial electron transport chain which drives oxidative phosphorylation. The respiratory chain contains 3 multisubunit complexes succinate dehydrogenase (complex II, CII), ubiquinol-cytochrome c oxidoreductase (cytochrome b-c1 complex, complex III, CIII) and cytochrome c oxidase (complex IV, CIV), that cooperate to transfer electrons derived from NADH and succinate to molecular oxygen, creating an electrochemical gradient over the inner membrane that drives transmembrane transport and the ATP synthase. Cytochrome c oxidase is the component of the respiratory chain that catalyzes the reduction of oxygen to water. Electrons originating from reduced cytochrome c in the intermembrane space (IMS) are transferred via the dinuclear copper A center (CU(A)) of subunit 2 and heme A of subunit 1 to the active site in subunit 1, a binuclear center (BNC) formed by heme A3 and copper B (CU(B)). The BNC reduces molecular oxygen to 2 water molecules using 4 electrons from cytochrome c in the IMS and 4 protons from the mitochondrial matrix. This is Cytochrome c oxidase subunit 2 (MT-CO2) from Nyctereutes procyonoides (Raccoon dog).